A 308-amino-acid chain; its full sequence is Olfactory receptor 8D1 (308 aa).

At 1 to 25 (MTMENYSMAAQFVLDGLTQQAELQL) the chain is on the extracellular side. A glycan (N-linked (GlcNAc...) asparagine) is linked at Asn5. Residues 26-46 (PLFLLFLGIYVVTVVGNLGMI) form a helical membrane-spanning segment. Residues 47–54 (LLIAVSPL) lie on the Cytoplasmic side of the membrane. The chain crosses the membrane as a helical span at residues 55–75 (LHTPMYYFLSSLSFVDFCYSS). Residues 76–99 (VITPKMLVNFLGKKNTILYSECMV) are Extracellular-facing. A disulfide bond links Cys97 and Cys189. Residues 100 to 120 (QLFFFVVFVVAEGYLLTAMAY) form a helical membrane-spanning segment. The Cytoplasmic segment spans residues 121 to 139 (DRYVAICSPLLYNAIMSSW). Residues 140-160 (VCSLLVLAAFFLGFLSALTHT) traverse the membrane as a helical segment. The Extracellular portion of the chain corresponds to 161-197 (SAMMKLSFCKSHIINHYFCDVLPLLNLSCSNTHLNEL). Asn186 is a glycosylation site (N-linked (GlcNAc...) asparagine). Residues 198–217 (LLFIIAGFNTLVPTLAVAVS) form a helical membrane-spanning segment. The Cytoplasmic portion of the chain corresponds to 218-237 (YAFILYSILHIRSSEGRSKA). A helical transmembrane segment spans residues 238-258 (FGTCSSHLMAVVIFFGSITFM). Residues 259-271 (YFKPPSSNSLDQE) are Extracellular-facing. A helical transmembrane segment spans residues 272–292 (KVSSVFYTTVIPMLNPLIYSL). Topologically, residues 293 to 308 (RNKDVKKALRKVLVGK) are cytoplasmic.

This sequence belongs to the G-protein coupled receptor 1 family. As to expression, expressed in the tongue.

The protein resides in the cell membrane. Odorant receptor (Potential). May be involved in taste perception. The chain is Olfactory receptor 8D1 (OR8D1) from Homo sapiens (Human).